A 216-amino-acid polypeptide reads, in one-letter code: GTP cyclohydrolase-2 (216 aa).

R50 to E54 contacts GTP. Positions 55, 66, and 68 each coordinate Zn(2+). GTP is bound by residues Q71, E93–R95, and T115. Catalysis depends on D127, which acts as the Proton acceptor. R129 (nucleophile) is an active-site residue. Positions 150 and 155 each coordinate GTP.

This sequence belongs to the GTP cyclohydrolase II family. Zn(2+) is required as a cofactor.

The enzyme catalyses GTP + 4 H2O = 2,5-diamino-6-hydroxy-4-(5-phosphoribosylamino)-pyrimidine + formate + 2 phosphate + 3 H(+). Its pathway is cofactor biosynthesis; riboflavin biosynthesis; 5-amino-6-(D-ribitylamino)uracil from GTP: step 1/4. Catalyzes the conversion of GTP to 2,5-diamino-6-ribosylamino-4(3H)-pyrimidinone 5'-phosphate (DARP), formate and pyrophosphate. The polypeptide is GTP cyclohydrolase-2 (Histophilus somni (strain 129Pt) (Haemophilus somnus)).